Reading from the N-terminus, the 311-residue chain is tRNA-cytidine(32) 2-sulfurtransferase (311 aa).

The PP-loop motif motif lies at 47–52 (SGGKDS). The [4Fe-4S] cluster site is built by Cys-122, Cys-125, and Cys-213.

Belongs to the TtcA family. Homodimer. Requires Mg(2+) as cofactor. The cofactor is [4Fe-4S] cluster.

The protein resides in the cytoplasm. The enzyme catalyses cytidine(32) in tRNA + S-sulfanyl-L-cysteinyl-[cysteine desulfurase] + AH2 + ATP = 2-thiocytidine(32) in tRNA + L-cysteinyl-[cysteine desulfurase] + A + AMP + diphosphate + H(+). It functions in the pathway tRNA modification. Functionally, catalyzes the ATP-dependent 2-thiolation of cytidine in position 32 of tRNA, to form 2-thiocytidine (s(2)C32). The sulfur atoms are provided by the cysteine/cysteine desulfurase (IscS) system. The chain is tRNA-cytidine(32) 2-sulfurtransferase from Salmonella arizonae (strain ATCC BAA-731 / CDC346-86 / RSK2980).